Here is a 332-residue protein sequence, read N- to C-terminus: Casein kinase II subunit alpha (332 aa).

Residues 34–319 enclose the Protein kinase domain; that stretch reads YEVVRKVGRG…ALEAMTHPYF (286 aa). Residues 40-48 and Lys-63 each bind ATP; that span reads VGRGKYSEV. Asp-151 functions as the Proton acceptor in the catalytic mechanism.

The protein belongs to the protein kinase superfamily. Ser/Thr protein kinase family. CK2 subfamily. In terms of assembly, tetramer of two alpha and two beta chains (possible).

It catalyses the reaction L-seryl-[protein] + ATP = O-phospho-L-seryl-[protein] + ADP + H(+). The catalysed reaction is L-threonyl-[protein] + ATP = O-phospho-L-threonyl-[protein] + ADP + H(+). Its function is as follows. Casein kinases are operationally defined by their preferential utilization of acidic proteins such as caseins as substrates. The alpha chain contains the catalytic site. In Zea mays (Maize), this protein is Casein kinase II subunit alpha (ACK2).